The chain runs to 222 residues: Tegument protein UL26 (222 aa).

This sequence belongs to the herpesviridae US22 family. In terms of assembly, interacts with UL25. Interacts with ISGylation machinery components ISG15, UBA7 and HERC5; these interactions inhibit global protein ISGylation. ISGylated; ISGylation regulates UL26 stability and inhibits its activities to suppress NF-kappa-B signaling.

It is found in the virion tegument. It localises to the host nucleus. Plays a role in the inhibition of host NF-kappa-B. This inhibition affects both the canonical and the non-canonical pathways. Blocks the induction of host IKK phosphorylation. May also influence the normal phosphorylation state of several tegument proteins including pp28 in virions. Also suppresses virus-induced ISGylation independent of its own ISGylation. In Homo sapiens (Human), this protein is Tegument protein UL26 (UL26).